We begin with the raw amino-acid sequence, 261 residues long: Short-chain dehydrogenase/reductase ARMGADRAFT_1018421 (261 aa).

NADP(+)-binding residues include isoleucine 21, aspartate 68, asparagine 95, lysine 128, tyrosine 161, lysine 165, valine 194, and threonine 196. The active-site Proton acceptor is the tyrosine 161. Lysine 165 (lowers pKa of active site Tyr) is an active-site residue.

Belongs to the short-chain dehydrogenases/reductases (SDR) family.

The protein operates within secondary metabolite biosynthesis. Functionally, short-chain dehydrogenase/reductase, part of the gene cluster that mediates the biosynthesis of melleolides, a range of antifungal and phytotoxic polyketide derivatives composed of an orsellinic acid (OA) moiety esterified to various sesquiterpene alcohols. The first step in melleolides biosynthesis is performed by the delta(6)-protoilludene synthase PRO1 which catalyzes the cyclization of farnesyl diphosphate to protoilludene. The orsellinic acid synthase armB produces OA by condensing acetyl-CoA with 3 malonyl-CoA units in a three-round chain elongation reaction folowed by a C2-C7 ring closure. ArmB further catalyzes the trans-esterification of OA to the various sesquiterpene alcohols resulting from the hydroxylation of protoilludene. The melleolides cluster also includes 5 cytochrome P450 monooxygenases, 4 NAD(+)-dependent oxidoreductases, one flavin-dependent oxidoreductase, and one O-methyltransferase. The cytochrome P450 monooxygenases may be involved in protoilludene hydroxylation to elaborate melleolides with multiple alcohol groups, such as melleolide D, which carries alcohol functionalities at C-4, C-5, C-10, and C-13. The role of the NAD(+)-dependent enzymes remains unknown. Numerous melleolides, including arnamial, show 5'-O-methylation of the aromatic moiety which may be catalyzed by the methyltransferase encoded in the cluster. The flavin-dependent oxidoreductase might represent the dehydrogenase yielding the aldehyde in position 1 of arnamial and other melleolides. Finally, several halogenase localized outside of the cluster, are able to catalyze the transfer of a single chlorine atom to the melleolide backbone, resulting in a 6'-chloromelleolide product. This Armillaria gallica (Bulbous honey fungus) protein is Short-chain dehydrogenase/reductase ARMGADRAFT_1018421.